The chain runs to 177 residues: Large ribosomal subunit protein uL6 (177 aa).

Belongs to the universal ribosomal protein uL6 family. Part of the 50S ribosomal subunit.

In terms of biological role, this protein binds to the 23S rRNA, and is important in its secondary structure. It is located near the subunit interface in the base of the L7/L12 stalk, and near the tRNA binding site of the peptidyltransferase center. The polypeptide is Large ribosomal subunit protein uL6 (Dichelobacter nodosus (strain VCS1703A)).